A 943-amino-acid polypeptide reads, in one-letter code: Sodium- and chloride-dependent GABA transporter ine (943 aa).

Over methionine 1–glutamine 345 the chain is Cytoplasmic. The disordered stretch occupies residues histidine 103 to leucine 122. 3 helical membrane-spanning segments follow: residues phenylalanine 346–methionine 366, glycine 373–methionine 393, and glycine 418–isoleucine 438. Over glycine 439–tryptophan 510 the chain is Extracellular. An N-linked (GlcNAc...) asparagine glycan is attached at asparagine 476. A run of 9 helical transmembrane segments spans residues glutamate 511–isoleucine 531, tyrosine 539–leucine 559, phenylalanine 591–tyrosine 607, threonine 618–serine 638, tryptophan 679–valine 699, isoleucine 723–glycine 743, tyrosine 754–phenylalanine 774, cysteine 799–tyrosine 819, and tyrosine 836–isoleucine 856. At asparagine 857 to glutamine 943 the chain is on the cytoplasmic side.

The protein belongs to the sodium:neurotransmitter symporter (SNF) (TC 2.A.22) family. As to expression, expressed both maternally and zygotically. Developing embryos exhibit expression in the posterior hindgut, foregut, midgut, Malpighian tubules, anal plate, Garland cells, and a subset of cells in the central nervous system. Central nervous system expression is seen in segmentally repeating in cells flanking the midline of the ventral ganglion. Isoform A and isoform B are colocalized in both the nervous system and the fluid reabsorption system.

Its subcellular location is the membrane. Its function is as follows. Plays a role in neuronal membrane excitation, important for normal response properties of the photoreceptor. Able to control excitability from either neurons or glia cells. Ine negatively regulates neuronal sodium channels. Controls neurotransmitter-mediated signaling pathways associated with the structure of the larval peripheral nerve, ine and eag control perineurial glial growth through partially redundant pathways. Isoform A and isoform B are both functional, although isoform A functions with greater efficiency. Has a role in osmolyte transport within the Malpighian tubule and hindgut. This chain is Sodium- and chloride-dependent GABA transporter ine, found in Drosophila melanogaster (Fruit fly).